The following is a 305-amino-acid chain: GMP synthase [glutamine-hydrolyzing] subunit B (305 aa).

The GMPS ATP-PPase domain maps to Val-2–Arg-184. Residue Ser-29–Ser-35 participates in ATP binding.

Heterodimer composed of a glutamine amidotransferase subunit (A) and a GMP-binding subunit (B).

It carries out the reaction XMP + L-glutamine + ATP + H2O = GMP + L-glutamate + AMP + diphosphate + 2 H(+). It participates in purine metabolism; GMP biosynthesis; GMP from XMP (L-Gln route): step 1/1. Functionally, catalyzes the synthesis of GMP from XMP. The chain is GMP synthase [glutamine-hydrolyzing] subunit B (guaAB) from Methanosarcina acetivorans (strain ATCC 35395 / DSM 2834 / JCM 12185 / C2A).